A 335-amino-acid chain; its full sequence is Eukaryotic translation initiation factor 3 subunit H-A (335 aa).

One can recognise an MPN domain in the interval 22-156 (IQVDGLVVLK…LKAYRLTPKL (135 aa)). Residues 254–272 (QQQKQQYQQRRQQENAQRQ) show a composition bias toward low complexity. Positions 254-282 (QQQKQQYQQRRQQENAQRQSRGEPPLPEE) are disordered.

This sequence belongs to the eIF-3 subunit H family. In terms of assembly, component of the eukaryotic translation initiation factor 3 (eIF-3) complex, which is composed of 13 subunits: eif3a, eif3b, eif3c, eif3d, eif3e, eif3f, eif3g, eif3h, eif3i, eif3j, eif3k, eif3l and eif3m.

The protein localises to the cytoplasm. Functionally, component of the eukaryotic translation initiation factor 3 (eIF-3) complex, which is involved in protein synthesis of a specialized repertoire of mRNAs and, together with other initiation factors, stimulates binding of mRNA and methionyl-tRNAi to the 40S ribosome. The eIF-3 complex specifically targets and initiates translation of a subset of mRNAs involved in cell proliferation. The chain is Eukaryotic translation initiation factor 3 subunit H-A (eif3ha) from Danio rerio (Zebrafish).